We begin with the raw amino-acid sequence, 471 residues long: 6-phosphofructo-2-kinase/fructose-2,6-bisphosphatase 1 (471 aa).

Ser2 is subject to N-acetylserine. Positions 2 to 250 are 6-phosphofructo-2-kinase; that stretch reads SREMGELTQT…AYYLMNIHVT (249 aa). The residue at position 33 (Ser33) is a Phosphoserine; by PKA. 49-57 serves as a coordination point for ATP; it reads GLPARGKTY. Beta-D-fructose 6-phosphate-binding residues include Arg82 and Arg105. The active site involves Asp131. Beta-D-fructose 6-phosphate contacts are provided by Thr133 and Arg139. Position 141 is a phosphoserine (Ser141). The active site involves Cys161. 170 to 175 serves as a coordination point for ATP; the sequence is NIKQVK. Positions 175, 196, and 200 each coordinate beta-D-fructose 6-phosphate. The segment at 251–471 is fructose-2,6-bisphosphatase; the sequence is PRSIYLCRHG…EALDTVPAHY (221 aa). Arg258 contacts beta-D-fructose 2,6-bisphosphate. His259 functions as the Tele-phosphohistidine intermediate in the catalytic mechanism. Beta-D-fructose 2,6-bisphosphate is bound by residues Asn265, Gly271, and Arg308. The Proton donor/acceptor role is filled by Glu328. Positions 339, 353, 357, 368, 394, and 398 each coordinate beta-D-fructose 2,6-bisphosphate. Position 350–353 (350–353) interacts with ATP; sequence FALR. Residues 394–398 and Tyr430 contribute to the ATP site; that span reads QAVMR.

It in the C-terminal section; belongs to the phosphoglycerate mutase family. In terms of assembly, homodimer. In terms of tissue distribution, liver.

It catalyses the reaction beta-D-fructose 2,6-bisphosphate + H2O = beta-D-fructose 6-phosphate + phosphate. The enzyme catalyses beta-D-fructose 6-phosphate + ATP = beta-D-fructose 2,6-bisphosphate + ADP + H(+). Phosphorylation at Ser-33 inhibits the kinase and activates the bisphosphatase. Its function is as follows. Synthesis and degradation of fructose 2,6-bisphosphate. The polypeptide is 6-phosphofructo-2-kinase/fructose-2,6-bisphosphatase 1 (Rattus norvegicus (Rat)).